The sequence spans 88 residues: Sec-independent protein translocase protein TatA (88 aa).

Residues methionine 1–glycine 21 traverse the membrane as a helical segment. Residues methionine 43–alanine 52 are compositionally biased toward basic and acidic residues. The disordered stretch occupies residues methionine 43 to alanine 88. Residues isoleucine 57–arginine 71 show a composition bias toward polar residues.

Belongs to the TatA/E family. The Tat system comprises two distinct complexes: a TatABC complex, containing multiple copies of TatA, TatB and TatC subunits, and a separate TatA complex, containing only TatA subunits. Substrates initially bind to the TatABC complex, which probably triggers association of the separate TatA complex to form the active translocon.

Its subcellular location is the cell membrane. Its function is as follows. Part of the twin-arginine translocation (Tat) system that transports large folded proteins containing a characteristic twin-arginine motif in their signal peptide across membranes. TatA could form the protein-conducting channel of the Tat system. This chain is Sec-independent protein translocase protein TatA, found in Mycobacterium marinum (strain ATCC BAA-535 / M).